The following is a 232-amino-acid chain: Ribonuclease 3 (232 aa).

One can recognise an RNase III domain in the interval 10–135; the sequence is ALKIYEATGY…LIGAMYMDGG (126 aa). Glu-48 lines the Mg(2+) pocket. Asp-52 is a catalytic residue. Asn-121 and Glu-124 together coordinate Mg(2+). The active site involves Glu-124. One can recognise a DRBM domain in the interval 161–230; sequence DPKTALQEWV…AKLMLKKITE (70 aa).

This sequence belongs to the ribonuclease III family. In terms of assembly, homodimer. The cofactor is Mg(2+).

It localises to the cytoplasm. It catalyses the reaction Endonucleolytic cleavage to 5'-phosphomonoester.. In terms of biological role, digests double-stranded RNA. Involved in the processing of primary rRNA transcript to yield the immediate precursors to the large and small rRNAs (23S and 16S). Processes some mRNAs, and tRNAs when they are encoded in the rRNA operon. Processes pre-crRNA and tracrRNA of type II CRISPR loci if present in the organism. The sequence is that of Ribonuclease 3 from Anaplasma marginale (strain St. Maries).